A 427-amino-acid chain; its full sequence is O-methyltransferase FrzF (427 aa).

Aspartate 281 provides a ligand contact to S-adenosyl-L-methionine. Catalysis depends on histidine 327, which acts as the Proton acceptor.

It belongs to the class I-like SAM-binding methyltransferase superfamily. Cation-independent O-methyltransferase family. In terms of assembly, homodimer.

The enzyme catalyses (1S,4S)-4-[(4-hydroxyphenyl)methyl]-2,5-diazaspiro[bicyclo[3.2.1]octane-6,1'-cyclohexan]-4'-one + S-adenosyl-L-methionine = (1S,4S)-4-[(4-methoxyphenyl)methyl]-2,5-diazaspiro[bicyclo[3.2.1]octane-6,1'-cyclohexan]-4'-one + S-adenosyl-L-homocysteine + H(+). It catalyses the reaction (1S,4S)-4-[(4-hydroxyphenyl)methyl]-2-methyl-2,5-diazaspiro[bicyclo[3.2.1]octane-6,1'-cyclohexan]-4'-one + S-adenosyl-L-methionine = (1S,4S)-4-[(4-methoxyphenyl)methyl]-2-methyl-2,5-diazaspiro[bicyclo[3.2.1]octane-6,1'-cyclohexan]-4'-one + S-adenosyl-L-homocysteine + H(+). Its pathway is secondary metabolite biosynthesis. Functionally, O-methyltransferase; part of the gene cluster that mediates the biosynthesis of the alkaloid (-)-FR901483, a potent immunosuppressant that shows efficacy in animal models and a probable inhibitor of purine nucleotide biosynthesis by targeting phosphoribosylpyrophosphate amidotransferase (PPAT). Within the pathway, FrzF methylates the phenolic oxygen at position C4. The biosynthesis of (-)-FR901483 starts with the condensation of two L-tyrosines to yield (S,S)-dityrosyl-piperazine. This process occurs in 3 steps with the non-canonical nonribosomal peptide synthetase FrzA catalyzing the reduction of L-tyrosine into L-tyrosinal, the spontaneous condensation of 2 L-tyrosinal units, and the subsequent reduction by the NmrA-like family domain-containing oxidoreductase FrzB. The cytochrome P450 monooxygenase FrzC then performs coupling between N10 and C1' to morph the piperazine into a 1,4-diazabicyclo[3.2.1]octane spiro-fused to a 2,5-cyclohexadienone. The dienone portion is further reduced to cyclohexanone by the flavin-dependent reductase FrzD. The methyltranserases (MTs) FrzE and FrzF are then involved in the methylation at the C10' amine and the C4 phenolic oxygen, respectively. The order of the two MTs appear to be interchangeable. Cleavage of the C9-N10' bond by the dioxygenase FrzG then leads to formation of a conjugated iminium. In addition to the oxidation of C9, an additional dehydrogenation between C7 and C8 can occur to give a likely shunt product. The next biosynthetic step is the intramolecular aldol condensation catalyzed by the newly identified aldolase FrzH to yield an aza-tricyclic product with the formation of a C9-C3' bond. The short-chain dehydrogenase/reductase FrzI then produces dephospho-(-)-FR901483 that is phosphorylated at C4'-OH into (-)-FR901483 by the phosphotransferase FrzJ. The protein is O-methyltransferase FrzF of Cladobotryum sp.